The primary structure comprises 320 residues: Undecaprenyl-diphosphatase (320 aa).

Transmembrane regions (helical) follow at residues 9–29 (FVLI…LEVF), 82–102 (GVAF…WYFW), 130–150 (LGIV…KTFI), 161–181 (LGAI…GEKL), 191–211 (LTMQ…IPGV), 236–256 (FLLG…DLLA), 265–285 (LPLI…IAGL), and 296–316 (VFIW…SAGI).

Belongs to the UppP family.

It localises to the cell inner membrane. It catalyses the reaction di-trans,octa-cis-undecaprenyl diphosphate + H2O = di-trans,octa-cis-undecaprenyl phosphate + phosphate + H(+). Functionally, catalyzes the dephosphorylation of undecaprenyl diphosphate (UPP). Confers resistance to bacitracin. The protein is Undecaprenyl-diphosphatase of Nostoc sp. (strain PCC 7120 / SAG 25.82 / UTEX 2576).